Here is a 186-residue protein sequence, read N- to C-terminus: Fucolectin-6 (186 aa).

The signal sequence occupies residues 1-32; sequence MKTCNLTDRMKVKMIMLLFQILAISTLQSVSA. The segment at 40 to 186 is F5/8 type C-like; the sequence is QENVAVRGKA…VEVNAMLPAN (147 aa). Ca(2+) is bound by residues Asn-67, Asp-70, Asn-72, and Ser-81. 3 cysteine pairs are disulfide-bonded: Cys-82–Cys-175, Cys-114–Cys-115, and Cys-137–Cys-153. Alpha-L-fucose is bound by residues His-84 and Arg-111. The short motif at 111-113 is the Cell attachment site element; sequence RGD. Arg-118 is an alpha-L-fucose binding site. Ca(2+)-binding residues include Cys-175 and Glu-176.

Belongs to the fucolectin family. In terms of assembly, homotrimer. As to expression, gill mucous cells.

It is found in the secreted. In terms of biological role, acts as a defensive agent. Recognizes blood group fucosylated oligosaccharides including A, B, H and Lewis B-type antigens. Does not recognize Lewis A antigen and has low affinity for monovalent haptens. The polypeptide is Fucolectin-6 (Anguilla japonica (Japanese eel)).